The chain runs to 207 residues: Large ribosomal subunit protein uL4 (207 aa).

Residues 56-75 are disordered; that stretch reads EVSGTTKKPFKQKGTGNARQ.

The protein belongs to the universal ribosomal protein uL4 family. Part of the 50S ribosomal subunit.

In terms of biological role, one of the primary rRNA binding proteins, this protein initially binds near the 5'-end of the 23S rRNA. It is important during the early stages of 50S assembly. It makes multiple contacts with different domains of the 23S rRNA in the assembled 50S subunit and ribosome. Functionally, forms part of the polypeptide exit tunnel. The protein is Large ribosomal subunit protein uL4 of Rickettsia prowazekii (strain Madrid E).